Consider the following 933-residue polypeptide: MKLKETLNLGKTAFPMRAGLPNKEPQWQAAWEEADLYTKRQELNAGKPAFHLHDGPPYANGNIHVGHALNKISKDIIVRSKSMSGFHVPYVPGWDTHGLPIEQVLAKQGVKRKEMDLADYLDMCRQYALSQVDKQRDDFKRLGVSADWENPYVTLDPQFEADQIRVFGAMADKGYIYRGAKPVYWSWSSESALAEAEIEYHDIDSTSLYYANKVKDGKGILDTNTYIVVWTTTPFTVTASRGLTVGPDMDYLVVKPAGSDRQYVVAEGLLDSLAGKFGWESFETLASHKGADLEYIVTEHPWDTDVEELVILGDHVTLESGTGIVHTAPGFGEDDYNVGTKYKLEVAVTVDERGLMMENAGPDFHGQFYDKVTPIVIDKLGDLLLAQEVINHSYPFDWRTKKPIIWRAVPQWFASVSDFRQDILDEIEKTTFHPSWGKTRLYNMIRDRGDWVISRQRAWGVPLPIFYAEDGTAIMTKEVTDHVANLFQENGSIIWWQKEAKDLLPEGFTHPGSPNGEFTKETDIMDVWFDSGSSWNGVMNARDNLSYPADLYLEGSDQYRGWFNSSLITSVAVNGHAPYKAILSQGFVLDGKGEKMSKSKGNIISPNDVAKQYGADILRLWVASVDTDNDVRVSMEILGQVSETYRKIRNTLRFLIANTSDFNPATDTVAYADLGAVDKYMTIVFNQLVATINDAYERYDFMTIYKAVVNFVTVDLSAFYLDFAKDVVYIEAANSLERRRMQTVFYDILVKITKLLTPILPHTTEEIWSYLEHESEAFVQLAEMPAAETFSAQEDILEAWSAFMTLRTQAQKALEEARNAKVIGKSLEAHLTIYASEEVKTLLTALDSDIALLLIVSQLTIADLADAPADAVAFEGVAFTVEHAVGEVCERSRRIDPTTRMRSYNAFVCDHSAKIIEENFPEAVAEGFEESGK.

The short motif at 57-67 is the 'HIGH' region element; sequence PYANGNIHVGH. Glutamate 554 provides a ligand contact to L-isoleucyl-5'-AMP. Positions 595-599 match the 'KMSKS' region motif; sequence KMSKS. An ATP-binding site is contributed by lysine 598.

It belongs to the class-I aminoacyl-tRNA synthetase family. IleS type 1 subfamily. As to quaternary structure, monomer.

The protein localises to the cytoplasm. The catalysed reaction is tRNA(Ile) + L-isoleucine + ATP = L-isoleucyl-tRNA(Ile) + AMP + diphosphate. Catalyzes the attachment of isoleucine to tRNA(Ile). As IleRS can inadvertently accommodate and process structurally similar amino acids such as valine, to avoid such errors it has two additional distinct tRNA(Ile)-dependent editing activities. One activity is designated as 'pretransfer' editing and involves the hydrolysis of activated Val-AMP. The other activity is designated 'posttransfer' editing and involves deacylation of mischarged Val-tRNA(Ile). The sequence is that of Isoleucine--tRNA ligase from Streptococcus pyogenes serotype M3 (strain ATCC BAA-595 / MGAS315).